We begin with the raw amino-acid sequence, 418 residues long: Secernin-3 (418 aa).

A propeptide spanning residues M1–S5 is cleaved from the precursor. C6 is a catalytic residue. C6 bears the Glyoxylic acid (Cys); alternate mark. Residue C6 is modified to Pyruvic acid (Cys); alternate.

It belongs to the peptidase C69 family. Secernin subfamily.

In terms of biological role, plays a role in thermal nociception. This chain is Secernin-3 (Scrn3), found in Mus musculus (Mouse).